The primary structure comprises 293 residues: tRNA pseudouridine synthase B (293 aa).

Asp39 functions as the Nucleophile in the catalytic mechanism.

It belongs to the pseudouridine synthase TruB family. Type 1 subfamily.

The catalysed reaction is uridine(55) in tRNA = pseudouridine(55) in tRNA. Responsible for synthesis of pseudouridine from uracil-55 in the psi GC loop of transfer RNAs. The polypeptide is tRNA pseudouridine synthase B (Streptococcus thermophilus (strain ATCC BAA-250 / LMG 18311)).